A 340-amino-acid chain; its full sequence is Phosphoribosylformylglycinamidine cyclo-ligase (340 aa).

This sequence belongs to the AIR synthase family.

It localises to the cytoplasm. It catalyses the reaction 2-formamido-N(1)-(5-O-phospho-beta-D-ribosyl)acetamidine + ATP = 5-amino-1-(5-phospho-beta-D-ribosyl)imidazole + ADP + phosphate + H(+). Its pathway is purine metabolism; IMP biosynthesis via de novo pathway; 5-amino-1-(5-phospho-D-ribosyl)imidazole from N(2)-formyl-N(1)-(5-phospho-D-ribosyl)glycinamide: step 2/2. The polypeptide is Phosphoribosylformylglycinamidine cyclo-ligase (Streptococcus sanguinis (strain SK36)).